A 460-amino-acid chain; its full sequence is UDP-N-acetylmuramoylalanine--D-glutamate ligase (460 aa).

117 to 123 contributes to the ATP binding site; it reads GTNGKTT.

The protein belongs to the MurCDEF family.

It localises to the cytoplasm. It catalyses the reaction UDP-N-acetyl-alpha-D-muramoyl-L-alanine + D-glutamate + ATP = UDP-N-acetyl-alpha-D-muramoyl-L-alanyl-D-glutamate + ADP + phosphate + H(+). It participates in cell wall biogenesis; peptidoglycan biosynthesis. Cell wall formation. Catalyzes the addition of glutamate to the nucleotide precursor UDP-N-acetylmuramoyl-L-alanine (UMA). The chain is UDP-N-acetylmuramoylalanine--D-glutamate ligase from Prochlorococcus marinus (strain MIT 9313).